We begin with the raw amino-acid sequence, 272 residues long: MASSSSNRQFSHRNANTFLTYPKCPENPEIACQMIWELVVRWIPKYILCAREAHKDGSLHLHALLQTEKPVRISDSRFFDINGFHPNIQSAKSVNRVRDYILKEPLAVFERGTFIPRKSPFLGKSDSEVKEKKPSKDEIMRDIISHSTSKEEYLSMIQKELPFDWSTKLQYFEYSANKLFPEIQEEFTNPHPPSSPDLLCNESINDWLQPNIFQVSPEAYMLLQPACYTLDDAISDLQWMDSVSSHQMKDQESRASTSSAQQEQENLLGPEA.

Positions 11 to 114 constitute a CRESS-DNA virus Rep endonuclease domain; it reads SHRNANTFLT…PLAVFERGTF (104 aa). Residues 18–21 carry the RCR-1 motif; it reads FLTY. A divalent metal cation-binding residues include glutamate 52, histidine 60, and histidine 62. Residues 60–62 carry the RCR-2 motif; it reads HLH. The active-site For DNA cleavage activity is tyrosine 100. The RCR-3 signature appears at 100-103; that stretch reads YILK. Position 104 (glutamate 104) interacts with a divalent metal cation. Residues 175-187 are oligomerization; that stretch reads SANKLFPEIQEEF. The segment at 198 to 202 is binding to RBR1; that stretch reads LLCNE. The tract at residues 221–230 is transactivation; that stretch reads MLLQPACYTL. The segment at 245-272 is disordered; that stretch reads SHQMKDQESRASTSSAQQEQENLLGPEA. A compositionally biased stretch (polar residues) spans 254 to 265; it reads RASTSSAQQEQE.

It belongs to the geminiviridae Rep protein family. As to quaternary structure, homooligomer. Interacts with host retinoblastoma-related protein 1 (RBR1), and may thereby deregulate the host cell cycle. Part of the C- and V-complexes which are RepA-Rep-DNA complexes involved in the c-sense and v-sense transcription. The cofactor is Mg(2+). Mn(2+) serves as cofactor.

It is found in the host nucleus. Its subcellular location is the host cytoplasm. In terms of biological role, implicated in enhancement of V-sense gene expression. Acts a an inhibitor of C-sense gene transcription. The protein is Replication-associated protein A of Avena sativa (Oat).